Reading from the N-terminus, the 404-residue chain is Protein L-Myc-1b (404 aa).

2 disordered regions span residues 175–195 and 238–331; these read KKQVSSGSESRTDSSDDEEID and QQHN…FLER. The span at 287–315 shows a compositional bias: polar residues; that stretch reads VPAQSPTVSASPTHTSYHLKSQPSSPQSS. Positions 321-373 constitute a bHLH domain; it reads DKRKTHNFLERKRRNDLRSRFLALRDEIPGLVDCPKTPKVVILTKATEYLRTL. The leucine-zipper stretch occupies residues 373 to 401; that stretch reads LHVSDRQKAQEKKQLKSKQQQLLRRLAEL.

Efficient DNA binding requires dimerization with another bHLH protein. Binds DNA as a heterodimer with max.

The protein localises to the nucleus. The polypeptide is Protein L-Myc-1b (Danio rerio (Zebrafish)).